The chain runs to 31 residues: Potassium channel toxin alpha-KTx 5.4 (31 aa).

3 cysteine pairs are disulfide-bonded: C3–C21, C8–C26, and C12–C28. The [R/K]XCQ motif stretch occupies residues 6–9 (RRCE). Y31 is modified (tyrosine amide).

This sequence belongs to the short scorpion toxin superfamily. Potassium channel inhibitor family. Alpha-KTx 05 subfamily. As to expression, expressed by the venom gland.

The protein resides in the secreted. Its function is as follows. Blocks small conductance calcium-activated potassium channels. Shows activity on KCa2.2/KCNN2 (IC(50)=0.0243 nM), KCa2.3/KCNN3 (IC(50)=1.7 nM), and KCa2.1/KCNN1 (IC(50)=42 nM). Induces cell death when tested on human T lymphoblastic leukemia Jurkat E6.1 and human breast cancer MDA-MB-231 cell lines which constituvely express KCa2.2/KCNN2, but not on human peripheral blood lymphocytes (which do not express KCa2.2/KCNN2). The protein is Potassium channel toxin alpha-KTx 5.4 of Hottentotta tamulus (Eastern Indian scorpion).